A 554-amino-acid polypeptide reads, in one-letter code: Carboxypeptidase Y homolog A (554 aa).

A signal peptide spans 1 to 17 (MRISASTVLLGAASAAS). Positions 18–137 (AASFQNQAQQ…QLDNFNLRVK (120 aa)) are excised as a propeptide. Disulfide bonds link C191–C431, C325–C339, C349–C372, C356–C365, and C394–C401. The N-linked (GlcNAc...) asparagine glycan is linked to N222. S278 is a catalytic residue. The active site involves D470. N-linked (GlcNAc...) asparagine glycosylation is present at N518. Residue H529 is part of the active site.

This sequence belongs to the peptidase S10 family.

Its subcellular location is the vacuole. The enzyme catalyses Release of a C-terminal amino acid with broad specificity.. Its function is as follows. Vacuolar carboxypeptidase involved in degradation of small peptides. Digests preferentially peptides containing an aliphatic or hydrophobic residue in P1' position, as well as methionine, leucine or phenylalanine in P1 position of ester substrate. This chain is Carboxypeptidase Y homolog A (CPYA), found in Sordaria macrospora (strain ATCC MYA-333 / DSM 997 / K(L3346) / K-hell).